The primary structure comprises 175 residues: Chromobox protein homolog hpl-2 (175 aa).

The 60-residue stretch at 19–78 folds into the Chromo domain; sequence FMVEKVLDKRTGKAGRDEFLIQWQGFPESDSSWEPRENLQCVEMLDEFEREFSKREKPIR. Residues 71 to 109 form a disordered region; that stretch reads SKREKPIRKRHSQKPEPSEDQADPEEDKDEKKETNQNDK. Residues 88-98 are compositionally biased toward acidic residues; sequence SEDQADPEEDK. Residues 99–109 are compositionally biased toward basic and acidic residues; the sequence is DEKKETNQNDK. In terms of domain architecture, Chromo 2; shadow subtype spans 115–172; it reads KQLKCIVGLTKGPGELHFLCKFSDDTARLLPAKEVNSRYPSQVIRYYESKLTIQDPKA.

Interacts with histone H3 when di-, or tri-methylated at 'Lys-27' (H3K27me2/me3), or tri-methylated at 'Lys-9' (H3K9me3). Interacts with Tar DNA-binding protein homolog tdp-1; interaction may maintain localization of hpl-2 to gene bodies. Interacts with histone H1 his-24, probably via interaction with hpl-1. Interacts with chromobox protein homolog hpl-1. As to quaternary structure, may form homodimers. Interacts (via chromo (shadow subtype) domain) with zinc finger protein lin-13 (via PLVPV motif); the interaction is direct and influences localization of hpl-2 to nuclear foci.

It localises to the nucleus. The protein localises to the chromosome. Its function is as follows. Seems to be involved in transcriptional silencing in heterochromatin-like complexes. Probably does not act as global transcriptional repressor, instead targeting a subset of genes. Involved in RNA processing mediated by Tar DNA-binding protein homolog tdp-1. Plays a role in linking epigenetic regulation with the innate immune response. Involved in the endoplasmic reticulum (ER) stress response via modulation of the unfolded protein response (UPR), acting mainly through the IRE1-XBP1 pathway and perhaps, to a lesser extent, through the autophagy pathway. May act in a common pathway with retinoblastoma-like protein homolog lin-35 and zinc finger protein lin-13 to influence the ER stress response in the intestine. Plays a role in the formation of the vulva and in fertility, acting together with a CoREST-like complex, and chromobox protein homolog hpl-1. Acting in concert with hpl-1 and histone H1 protein his-24, involved in reproduction, somatic gonad development, male tail development and vulval cell fate specification; perhaps as a result of modulating expression of Hox genes mab-5 and egl-5. In vulval cell fate specification may act by repressing transcription, of EGF family gene lin-3 in hypodermal hyp7, and of homeobox lin-39 in vulval precursor cells (VPC). Role in growth and somatic gonad development is antagonized by histone-lysine N-methyltransferase set-2/SET1. Required for larval development, acting redundantly with hpl-1. Plays a role in regulation of the developmentally arrested larval state known as dauer, longevity, and lipid metabolism. The chain is Chromobox protein homolog hpl-2 from Caenorhabditis elegans.